Reading from the N-terminus, the 68-residue chain is UPF0434 protein H16_A0605 (68 aa).

The protein belongs to the UPF0434 family.

This is UPF0434 protein H16_A0605 from Cupriavidus necator (strain ATCC 17699 / DSM 428 / KCTC 22496 / NCIMB 10442 / H16 / Stanier 337) (Ralstonia eutropha).